A 128-amino-acid chain; its full sequence is MARRPRAKKKERKNIETGVAHIKSTFNNTVITISDVRGNAISWSSAGTVGFKGSRKSTPFAAQLAAEKAAREAMEHGMREVAVMVKGPGAGREAAIRSLQAAGLEVSLIKDVTPIPHNGCRPPKRRRV.

The protein belongs to the universal ribosomal protein uS11 family. As to quaternary structure, part of the 30S ribosomal subunit. Interacts with proteins S7 and S18. Binds to IF-3.

In terms of biological role, located on the platform of the 30S subunit, it bridges several disparate RNA helices of the 16S rRNA. Forms part of the Shine-Dalgarno cleft in the 70S ribosome. This is Small ribosomal subunit protein uS11 from Desulforudis audaxviator (strain MP104C).